A 474-amino-acid polypeptide reads, in one-letter code: tRNA-2-methylthio-N(6)-dimethylallyladenosine synthase (474 aa).

Positions 3–120 (KKLHIKTWGC…LPEMINSVRG (118 aa)) constitute an MTTase N-terminal domain. Residues Cys-12, Cys-49, Cys-83, Cys-157, Cys-161, and Cys-164 each coordinate [4Fe-4S] cluster. The Radical SAM core domain maps to 143–375 (RADGPTAFVS…QDRINQQTTA (233 aa)). The region spanning 378 to 441 (RRKLGTVQRI…ANSLRGMLLR (64 aa)) is the TRAM domain.

This sequence belongs to the methylthiotransferase family. MiaB subfamily. As to quaternary structure, monomer. It depends on [4Fe-4S] cluster as a cofactor.

It localises to the cytoplasm. It catalyses the reaction N(6)-dimethylallyladenosine(37) in tRNA + (sulfur carrier)-SH + AH2 + 2 S-adenosyl-L-methionine = 2-methylsulfanyl-N(6)-dimethylallyladenosine(37) in tRNA + (sulfur carrier)-H + 5'-deoxyadenosine + L-methionine + A + S-adenosyl-L-homocysteine + 2 H(+). Its function is as follows. Catalyzes the methylthiolation of N6-(dimethylallyl)adenosine (i(6)A), leading to the formation of 2-methylthio-N6-(dimethylallyl)adenosine (ms(2)i(6)A) at position 37 in tRNAs that read codons beginning with uridine. This chain is tRNA-2-methylthio-N(6)-dimethylallyladenosine synthase, found in Erwinia tasmaniensis (strain DSM 17950 / CFBP 7177 / CIP 109463 / NCPPB 4357 / Et1/99).